We begin with the raw amino-acid sequence, 747 residues long: Phenylalanine ammonia-lyase 2 (747 aa).

Residues M1–G20 are compositionally biased toward polar residues. The segment at M1–S47 is disordered. Y124 acts as the Proton donor/acceptor in catalysis. The 5-imidazolinone (Ala-Gly) cross-link spans A229–G231. Residue S230 is modified to 2,3-didehydroalanine (Ser). (E)-cinnamate is bound by residues N290, Q380, R386, N416, K487, E515, and N518.

Belongs to the PAL/histidase family. In terms of assembly, homotetramer. Post-translationally, contains an active site 4-methylidene-imidazol-5-one (MIO), which is formed autocatalytically by cyclization and dehydration of residues Ala-Ser-Gly.

It is found in the cytoplasm. The catalysed reaction is L-phenylalanine = (E)-cinnamate + NH4(+). It participates in phenylpropanoid metabolism; trans-cinnamate biosynthesis; trans-cinnamate from L-phenylalanine: step 1/1. Its function is as follows. Catalyzes the non-oxidative deamination of L-phenylalanine to form trans-cinnamic acid and a free ammonium ion. Facilitates the commitment step in phenylpropanoid pathways that produce secondary metabolites such as lignins, coumarins and flavonoids. In Pleurotus ostreatus (Oyster mushroom), this protein is Phenylalanine ammonia-lyase 2.